The primary structure comprises 85 residues: CRISPR-associated endoribonuclease Cas2 (85 aa).

Aspartate 8 serves as a coordination point for Mg(2+).

It belongs to the CRISPR-associated endoribonuclease Cas2 protein family. Homodimer, forms a heterotetramer with a Cas1 homodimer. Requires Mg(2+) as cofactor.

In terms of biological role, CRISPR (clustered regularly interspaced short palindromic repeat), is an adaptive immune system that provides protection against mobile genetic elements (viruses, transposable elements and conjugative plasmids). CRISPR clusters contain sequences complementary to antecedent mobile elements and target invading nucleic acids. CRISPR clusters are transcribed and processed into CRISPR RNA (crRNA). Functions as a ssRNA-specific endoribonuclease. Involved in the integration of spacer DNA into the CRISPR cassette. The polypeptide is CRISPR-associated endoribonuclease Cas2 (Pyrococcus furiosus (strain ATCC 43587 / DSM 3638 / JCM 8422 / Vc1)).